An 85-amino-acid chain; its full sequence is Large ribosomal subunit protein bL27 (85 aa).

A disordered region spans residues 1-27 (MAHKKAGGSTKNGRDSQSKRLGVKRYG).

It belongs to the bacterial ribosomal protein bL27 family.

The sequence is that of Large ribosomal subunit protein bL27 from Halorhodospira halophila (strain DSM 244 / SL1) (Ectothiorhodospira halophila (strain DSM 244 / SL1)).